Consider the following 189-residue polypeptide: Large ribosomal subunit protein eL20 (189 aa).

The protein belongs to the eukaryotic ribosomal protein eL20 family.

Its subcellular location is the cytoplasm. This Tetrahymena thermophila protein is Large ribosomal subunit protein eL20 (RPL18A).